We begin with the raw amino-acid sequence, 343 residues long: Uroporphyrinogen decarboxylase (343 aa).

Residues arginine 23–arginine 27, aspartate 73, tyrosine 150, serine 205, and histidine 322 each bind substrate.

Belongs to the uroporphyrinogen decarboxylase family. In terms of assembly, homodimer.

Its subcellular location is the cytoplasm. It carries out the reaction uroporphyrinogen III + 4 H(+) = coproporphyrinogen III + 4 CO2. It participates in porphyrin-containing compound metabolism; protoporphyrin-IX biosynthesis; coproporphyrinogen-III from 5-aminolevulinate: step 4/4. Its function is as follows. Catalyzes the decarboxylation of four acetate groups of uroporphyrinogen-III to yield coproporphyrinogen-III. The protein is Uroporphyrinogen decarboxylase of Cereibacter sphaeroides (strain ATCC 17029 / ATH 2.4.9) (Rhodobacter sphaeroides).